Here is a 471-residue protein sequence, read N- to C-terminus: UDP-glycosyltransferase CGT (471 aa).

The active-site Proton acceptor is the histidine 24. Histidine 24 lines the an anthocyanidin pocket. The active-site Charge relay is aspartate 120. Residue threonine 143 coordinates UDP-alpha-D-glucose. Positions 280–281 are UDP; the sequence is SR. UDP-alpha-D-glucose contacts are provided by valine 343, glutamine 345, histidine 360, tryptophan 363, asparagine 364, serine 365, and glutamate 368. An an anthocyanidin-binding site is contributed by glycine 383. UDP-alpha-D-glucose is bound by residues aspartate 384 and glutamine 385.

It belongs to the UDP-glycosyltransferase family.

It carries out the reaction a 3'-hydro-2'-hydroxy-beta-oxodihydrochalcone + UDP-alpha-D-glucose = a 3'-(beta-D-glucopyranosyl)-2'-hydroxy-beta-oxodihydrochalcone + UDP + H(+). In terms of biological role, UDP-glucose-dependent glucosyltransferase catalyzing the c-glucosylation of 2-hydroxyflavanones. This is UDP-glycosyltransferase CGT from Oryza sativa subsp. japonica (Rice).